The primary structure comprises 290 residues: Type II secretion system protein C (290 aa).

Topologically, residues 1 to 28 (MTLPFRDDLLSSLLARCKTVPLSRFSQP) are cytoplasmic. Residues 29-46 (LFWLLLLLLAHQCAGLTW) traverse the membrane as a helical segment. Residues 47 to 290 (RLLDLGSQQS…LYDVYVGLSE (244 aa)) are Periplasmic-facing.

The protein belongs to the GSP C family.

It is found in the cell inner membrane. Functionally, involved in a type II secretion system (T2SS, formerly general secretion pathway, GSP) for the export of proteins. The polypeptide is Type II secretion system protein C (exeC) (Aeromonas salmonicida).